We begin with the raw amino-acid sequence, 564 residues long: Carbamoyl phosphate synthase large chain, N-terminal section (564 aa).

A carboxyphosphate synthetic domain region spans residues 1 to 399; sequence MPETPNKVLI…ALQKAIRSLE (399 aa). 12 residues coordinate ATP: arginine 127, arginine 167, glycine 173, glycine 174, glutamate 206, valine 208, glutamate 213, glycine 239, valine 240, histidine 241, glutamine 282, and glutamate 296. One can recognise an ATP-grasp domain in the interval 131–325; sequence RAFMKKIGEP…IARIAAKIAI (195 aa). The Mg(2+) site is built by glutamine 282, glutamate 296, and asparagine 298. Positions 282, 296, and 298 each coordinate Mn(2+). The tract at residues 400–560 is oligomerization domain; it reads IGEPGLGPSP…YSTYEEECEA (161 aa).

Belongs to the CarB family. As to quaternary structure, composed of two chains; the small (or glutamine) chain promotes the hydrolysis of glutamine to ammonia, which is used by the large (or ammonia) chain to synthesize carbamoyl phosphate. Tetramer of heterodimers (alpha,beta)4. Mg(2+) is required as a cofactor. Requires Mn(2+) as cofactor.

It catalyses the reaction hydrogencarbonate + L-glutamine + 2 ATP + H2O = carbamoyl phosphate + L-glutamate + 2 ADP + phosphate + 2 H(+). The enzyme catalyses hydrogencarbonate + NH4(+) + 2 ATP = carbamoyl phosphate + 2 ADP + phosphate + 2 H(+). It participates in amino-acid biosynthesis; L-arginine biosynthesis; carbamoyl phosphate from bicarbonate: step 1/1. Its pathway is pyrimidine metabolism; UMP biosynthesis via de novo pathway; (S)-dihydroorotate from bicarbonate: step 1/3. Large subunit of the glutamine-dependent carbamoyl phosphate synthetase (CPSase). CPSase catalyzes the formation of carbamoyl phosphate from the ammonia moiety of glutamine, carbonate, and phosphate donated by ATP, constituting the first step of 2 biosynthetic pathways, one leading to arginine and/or urea and the other to pyrimidine nucleotides. The large subunit (synthetase) binds the substrates ammonia (free or transferred from glutamine from the small subunit), hydrogencarbonate and ATP and carries out an ATP-coupled ligase reaction, activating hydrogencarbonate by forming carboxy phosphate which reacts with ammonia to form carbamoyl phosphate. This Methanopyrus kandleri (strain AV19 / DSM 6324 / JCM 9639 / NBRC 100938) protein is Carbamoyl phosphate synthase large chain, N-terminal section (carB1).